We begin with the raw amino-acid sequence, 239 residues long: Endonuclease V (239 aa).

Mg(2+) is bound by residues aspartate 48 and aspartate 116.

Belongs to the endonuclease V family. The cofactor is Mg(2+).

The protein localises to the cytoplasm. The catalysed reaction is Endonucleolytic cleavage at apurinic or apyrimidinic sites to products with a 5'-phosphate.. DNA repair enzyme involved in the repair of deaminated bases. Selectively cleaves double-stranded DNA at the second phosphodiester bond 3' to a deoxyinosine leaving behind the intact lesion on the nicked DNA. In Xanthomonas oryzae pv. oryzae (strain MAFF 311018), this protein is Endonuclease V.